We begin with the raw amino-acid sequence, 268 residues long: Glutamine amidotransferase-like class 1 domain-containing protein 3, mitochondrial (268 aa).

The transit peptide at 1 to 41 directs the protein to the mitochondrion; that stretch reads MAAVRVLVASRLAAASAFTSLSPGGRTPSQRAALHLSVPRP. An N6-acetyllysine mark is found at lysine 151, lysine 157, and lysine 164. Residue lysine 203 is modified to N6-acetyllysine; alternate. At lysine 203 the chain carries N6-succinyllysine; alternate. The residue at position 219 (lysine 219) is an N6-acetyllysine. 2 positions are modified to N6-acetyllysine; alternate: lysine 223 and lysine 233. N6-succinyllysine; alternate is present on residues lysine 223 and lysine 233.

It belongs to the GATD3 family.

It localises to the mitochondrion. The polypeptide is Glutamine amidotransferase-like class 1 domain-containing protein 3, mitochondrial (Homo sapiens (Human)).